We begin with the raw amino-acid sequence, 180 residues long: UPF0227 protein YcfP (180 aa).

The protein belongs to the UPF0227 family.

The polypeptide is UPF0227 protein YcfP (Salmonella paratyphi A (strain ATCC 9150 / SARB42)).